The chain runs to 584 residues: Glutathione hydrolase proenzyme (584 aa).

Residues 1–25 (MAPAAMNLLCTVLYLLSSFAQVSDA) form the signal peptide. Asn-111 carries an N-linked (GlcNAc...) asparagine glycan. Arg-120 is an L-glutamate binding site. Residues Asn-135, Asn-262, Asn-272, Asn-350, and Asn-370 are each glycosylated (N-linked (GlcNAc...) asparagine). Thr-395 acts as the Nucleophile in catalysis. Residues Thr-413, Glu-434, and 465–466 (SS) each bind L-glutamate. Asn-547 carries an N-linked (GlcNAc...) asparagine glycan.

This sequence belongs to the gamma-glutamyltransferase family. As to quaternary structure, heterodimer composed of the light and heavy chains. The active site is located in the light chain. Cleaved by autocatalysis into a large and a small subunit and the autocatalytic cleavage is essential to the functional activation of the enzyme.

Its subcellular location is the secreted. The enzyme catalyses an N-terminal (5-L-glutamyl)-[peptide] + an alpha-amino acid = 5-L-glutamyl amino acid + an N-terminal L-alpha-aminoacyl-[peptide]. The catalysed reaction is glutathione + H2O = L-cysteinylglycine + L-glutamate. It catalyses the reaction an S-substituted glutathione + H2O = an S-substituted L-cysteinylglycine + L-glutamate. It carries out the reaction leukotriene C4 + H2O = leukotriene D4 + L-glutamate. The protein operates within sulfur metabolism; glutathione metabolism. Its function is as follows. Cleaves the gamma-glutamyl bond of extracellular glutathione (gamma-Glu-Cys-Gly), glutathione conjugates, and other gamma-glutamyl compounds. The metabolism of glutathione releases free glutamate and the dipeptide cysteinyl-glycine, which is hydrolyzed to cysteine and glycine by dipeptidases. In the presence of high concentrations of dipeptides and some amino acids, can also catalyze a transpeptidation reaction, transferring the gamma-glutamyl moiety to an acceptor amino acid to form a new gamma-glutamyl compound. Initiates extracellular glutathione (GSH) breakdown, provides cells with a local cysteine supply and contributes to maintain intracellular GSH level. It is part of the cell antioxidant defense mechanism. The protein is Glutathione hydrolase proenzyme of Arthroderma benhamiae (strain ATCC MYA-4681 / CBS 112371) (Trichophyton mentagrophytes).